The chain runs to 183 residues: Translocon-associated protein subunit beta (183 aa).

A signal peptide spans M1–A17. The Lumenal portion of the chain corresponds to E18–H146. The N-linked (GlcNAc...) (high mannose) asparagine glycan is linked to N88. The N-linked (GlcNAc...) asparagine glycan is linked to N104. The chain crosses the membrane as a helical span at residues F147–L167. Topologically, residues W168 to N183 are cytoplasmic.

The protein belongs to the TRAP-beta family. In terms of assembly, heterotetramer of TRAP-alpha, TRAP-beta, TRAP-delta and TRAP-gamma. Interacts with STING1.

It is found in the endoplasmic reticulum membrane. Functionally, TRAP proteins are part of a complex whose function is to bind calcium to the ER membrane and thereby regulate the retention of ER resident proteins. This chain is Translocon-associated protein subunit beta (Ssr2), found in Mus musculus (Mouse).